A 251-amino-acid polypeptide reads, in one-letter code: Extracellular superoxide dismutase [Cu-Zn] (251 aa).

The first 15 residues, 1–15 (MLAFLFYGLLLAACG), serve as a signal peptide directing secretion. Residues 16 to 24 (SVTMSNPGE) constitute a propeptide that is removed on maturation. Cystine bridges form between Cys77-Cys222 and Cys139-Cys221. N-linked (GlcNAc...) asparagine glycosylation occurs at Asn121. Residues His128, His130, and His145 each coordinate Cu cation. His145, His153, His156, and Asp159 together coordinate Zn(2+). Residue His195 participates in Cu cation binding. Positions 230 to 251 (AAWESQTKERKKRRRESECKTT) are disordered.

This sequence belongs to the Cu-Zn superoxide dismutase family. Homotetramer. Directly interacts with ATP7A/MNK; this interaction is copper-dependent and is required for SOD3 activity. Cu cation is required as a cofactor. Requires Zn(2+) as cofactor.

It localises to the secreted. Its subcellular location is the extracellular space. The protein resides in the golgi apparatus. It is found in the trans-Golgi network. It carries out the reaction 2 superoxide + 2 H(+) = H2O2 + O2. In terms of biological role, protect the extracellular space from toxic effect of reactive oxygen intermediates by converting superoxide radicals into hydrogen peroxide and oxygen. The protein is Extracellular superoxide dismutase [Cu-Zn] (Sod3) of Mus musculus (Mouse).